Reading from the N-terminus, the 430-residue chain is Adenylosuccinate synthetase (430 aa).

GTP contacts are provided by residues 12 to 18 (GDEGKGK) and 40 to 42 (GHT). Aspartate 13 functions as the Proton acceptor in the catalytic mechanism. Mg(2+)-binding residues include aspartate 13 and glycine 40. Residues 13–16 (DEGK), 38–41 (NAGH), threonine 129, arginine 143, glutamine 224, threonine 239, and arginine 303 contribute to the IMP site. Histidine 41 acts as the Proton donor in catalysis. Position 299–305 (299–305 (ATTGRRR)) interacts with substrate. Residues arginine 305, 331 to 333 (KLD), and 413 to 415 (SVG) each bind GTP.

It belongs to the adenylosuccinate synthetase family. In terms of assembly, homodimer. Requires Mg(2+) as cofactor.

It is found in the cytoplasm. It carries out the reaction IMP + L-aspartate + GTP = N(6)-(1,2-dicarboxyethyl)-AMP + GDP + phosphate + 2 H(+). Its pathway is purine metabolism; AMP biosynthesis via de novo pathway; AMP from IMP: step 1/2. Functionally, plays an important role in the de novo pathway of purine nucleotide biosynthesis. Catalyzes the first committed step in the biosynthesis of AMP from IMP. This Desulfatibacillum aliphaticivorans protein is Adenylosuccinate synthetase.